Reading from the N-terminus, the 131-residue chain is D-ribose pyranase (131 aa).

The active-site Proton donor is H20. Substrate-binding positions include D28, H98, and 120 to 122; that span reads YAN.

Belongs to the RbsD / FucU family. RbsD subfamily. As to quaternary structure, homodecamer.

It localises to the cytoplasm. It carries out the reaction beta-D-ribopyranose = beta-D-ribofuranose. Its pathway is carbohydrate metabolism; D-ribose degradation; D-ribose 5-phosphate from beta-D-ribopyranose: step 1/2. Functionally, catalyzes the interconversion of beta-pyran and beta-furan forms of D-ribose. This is D-ribose pyranase from Clostridium perfringens (strain SM101 / Type A).